Here is a 426-residue protein sequence, read N- to C-terminus: Histidine--tRNA ligase (426 aa).

It belongs to the class-II aminoacyl-tRNA synthetase family. As to quaternary structure, homodimer.

The protein localises to the cytoplasm. The catalysed reaction is tRNA(His) + L-histidine + ATP = L-histidyl-tRNA(His) + AMP + diphosphate + H(+). The sequence is that of Histidine--tRNA ligase from Hydrogenovibrio crunogenus (strain DSM 25203 / XCL-2) (Thiomicrospira crunogena).